The primary structure comprises 149 residues: MKTFTPKPADLTHDWYVIDATDVVLGRLATQAAVLLRGKNKPTYAPHADSGNHVIIINADKIALTGNKMGKELYSHSGRPGGLRRDSYAELLEKNPERIIKNAVKGMLPKNRLAKVQLDRLRVFRGAEHPHTPQKPQVFEIAQVSQQAK.

The protein belongs to the universal ribosomal protein uL13 family. Part of the 50S ribosomal subunit.

Its function is as follows. This protein is one of the early assembly proteins of the 50S ribosomal subunit, although it is not seen to bind rRNA by itself. It is important during the early stages of 50S assembly. The protein is Large ribosomal subunit protein uL13 of Bifidobacterium longum subsp. infantis (strain ATCC 15697 / DSM 20088 / JCM 1222 / NCTC 11817 / S12).